Reading from the N-terminus, the 410-residue chain is Phosphoglycerate kinase (410 aa).

Substrate-binding positions include 19-21 (DLN), R34, 57-60 (HQGK), R114, and R154. ATP-binding positions include E332 and 358–361 (GGHS).

The protein belongs to the phosphoglycerate kinase family. Homodimer.

The protein resides in the cytoplasm. The enzyme catalyses (2R)-3-phosphoglycerate + ATP = (2R)-3-phospho-glyceroyl phosphate + ADP. It functions in the pathway carbohydrate degradation; glycolysis; pyruvate from D-glyceraldehyde 3-phosphate: step 2/5. The chain is Phosphoglycerate kinase (pgk) from Pyrococcus abyssi (strain GE5 / Orsay).